We begin with the raw amino-acid sequence, 88 residues long: MGSIGWAQLLIIAVIVVLLFGTNKLRTLGSDLGASIKGFKKAMGDDSQTPPTNVDKTSNDADFAKSITEKQQPVAKAEESKSHEKEQG.

A helical membrane pass occupies residues 1–21 (MGSIGWAQLLIIAVIVVLLFG). Residues 41 to 88 (KAMGDDSQTPPTNVDKTSNDADFAKSITEKQQPVAKAEESKSHEKEQG) are disordered. Polar residues predominate over residues 46-56 (DSQTPPTNVDK). The span at 76–88 (KAEESKSHEKEQG) shows a compositional bias: basic and acidic residues.

This sequence belongs to the TatA/E family. In terms of assembly, the Tat system comprises two distinct complexes: a TatABC complex, containing multiple copies of TatA, TatB and TatC subunits, and a separate TatA complex, containing only TatA subunits. Substrates initially bind to the TatABC complex, which probably triggers association of the separate TatA complex to form the active translocon.

The protein resides in the cell inner membrane. Part of the twin-arginine translocation (Tat) system that transports large folded proteins containing a characteristic twin-arginine motif in their signal peptide across membranes. TatA could form the protein-conducting channel of the Tat system. This Yersinia pestis protein is Sec-independent protein translocase protein TatA.